We begin with the raw amino-acid sequence, 536 residues long: MSKKILYGKEARKALLQGVDAIANTVKVTLGPKGRNVILEKAYESPAIVNDGVSIAKEIELKNPYQNMGAKLVYEVASKTNDKAGDGTTTATVLAQSMIHRGFDAIDAGANPVLVKEGIELASLTVAKKLLAKSKKVDDQEDIQNVASVSSGSQEIGKIIAQAMQKVGKDGVINVDESKGFETELEVVEGLQYDKGYASPYFVSDRESMTVHLENALVLVTDHKISTVQEIVPILEEVVKASRPLLIVAEAVENEVLGVLVANKLRGTFNVVVTNAPGFGDNQKEMLKDIAVLTKANFVFKDLNMKLADLKMDDLGNINKVIIKKDNTTLISNSKSPELEKRIQLLKTQIKNSTSDYETKNLQERLAKLSGGVALIKVGAATDTELKDKKLRIEDALNATKAAITEGIVVGGGKALVEVYQELKDTLVSDNKEVQQGIDLVVQSLLVPTYQIAYNAGFSGKDVVKQQLLQPSNFGFNAKEGKYVCLLKEGIIDPTKVTRQAVINAASISALMITTEAAVVSFKENKDNNFDLGTQE.

ATP is bound by residues 29–32 (TLGP), 86–90 (DGTTT), glycine 412, and aspartate 493.

It belongs to the chaperonin (HSP60) family. Forms a cylinder of 14 subunits composed of two heptameric rings stacked back-to-back. Interacts with the co-chaperonin GroES.

It is found in the cytoplasm. The enzyme catalyses ATP + H2O + a folded polypeptide = ADP + phosphate + an unfolded polypeptide.. In terms of biological role, together with its co-chaperonin GroES, plays an essential role in assisting protein folding. The GroEL-GroES system forms a nano-cage that allows encapsulation of the non-native substrate proteins and provides a physical environment optimized to promote and accelerate protein folding. The chain is Chaperonin GroEL from Aster yellows witches'-broom phytoplasma (strain AYWB).